The following is a 271-amino-acid chain: Methylcorrinoid:tetrahydrofolate methyltransferase (271 aa).

One can recognise a Pterin-binding domain in the interval 1–247 (MIIIGEKLNG…GAIFATDALL (247 aa)).

It belongs to the vitamin-B12 dependent methionine synthase family. The proline betaine:THF methyl transfer system is composed of two methyltransferases, MtpB and MtqA, and the corrinoid protein MtqC. The L-carnitine:THF methyl transfer system is composed of two methyltransferases, MtcB and MtqA, and the corrinoid protein MtqC.

The catalysed reaction is methyl-Co(III)-[quaternary-amine-specific corrinoid protein] + (6S)-5,6,7,8-tetrahydrofolate = Co(I)-[quaternary-amine-specific corrinoid protein] + (6S)-5-methyl-5,6,7,8-tetrahydrofolate + H(+). Functionally, involved in the degradation of the quaternary amines L-proline betaine and L-carnitine. Component of a corrinoid-dependent methyltransferase system that transfers a methyl group from L-proline betaine or L-carnitine to tetrahydrofolate (THF), forming methyl-THF, a key intermediate in the Wood-Ljungdahl acetogenesis pathway. MtqA catalyzes the transfer of a methyl group from the methylated corrinoid protein MtqC to THF, forming methyl-THF. The polypeptide is Methylcorrinoid:tetrahydrofolate methyltransferase (Eubacterium limosum).